The chain runs to 564 residues: Urocanate hydratase (564 aa).

Residues 54-55 (GG), Gln-132, 178-180 (GMG), Glu-198, Arg-203, 244-245 (NA), 269-273 (QTSAH), 279-280 (YL), and Tyr-328 each bind NAD(+). Residue Cys-416 is part of the active site. Residue Gly-498 participates in NAD(+) binding.

Belongs to the urocanase family. Homodimer. The cofactor is NAD(+).

The enzyme catalyses 4-imidazolone-5-propanoate = trans-urocanate + H2O. Its pathway is amino-acid degradation; L-histidine degradation into L-glutamate; N-formimidoyl-L-glutamate from L-histidine: step 2/3. In Trifolium repens (Creeping white clover), this protein is Urocanate hydratase.